A 147-amino-acid chain; its full sequence is Male-specific protein scotti (147 aa).

The disordered stretch occupies residues 57 to 76 (EPPLGVFPAQGGPNGPPRLR). Residue Asn-128 is glycosylated (N-linked (GlcNAc...) asparagine).

This sequence belongs to the male-specific scotti family.

Post-meiotically transcribed gene that has a role in late spermiogenesis; required for actin cone progression during spermatid individualization. This chain is Male-specific protein scotti, found in Drosophila simulans (Fruit fly).